Reading from the N-terminus, the 145-residue chain is Actin-depolymerizing factor 11 (145 aa).

The region spanning 11 to 145 (SSGIGVAAEC…DIELLRERAH (135 aa)) is the ADF-H domain.

It belongs to the actin-binding proteins ADF family.

Actin-depolymerizing protein. Severs actin filaments (F-actin) and binds to actin monomers. The sequence is that of Actin-depolymerizing factor 11 (ADF11) from Oryza sativa subsp. japonica (Rice).